The following is a 190-amino-acid chain: Sec-independent protein translocase protein TatB (190 aa).

Residues 2–22 traverse the membrane as a helical segment; sequence LPDIGGTELLVIAAVALIVVG. A disordered region spans residues 130 to 190; that stretch reads IVSKPARKPP…KASTNSDITS (61 aa). Residues 134-144 show a composition bias toward basic residues; it reads PARKPPAKKAA. Residues 145–163 are compositionally biased toward low complexity; sequence AKPAAKAELVSKPKASAKA.

Belongs to the TatB family. As to quaternary structure, the Tat system comprises two distinct complexes: a TatABC complex, containing multiple copies of TatA, TatB and TatC subunits, and a separate TatA complex, containing only TatA subunits. Substrates initially bind to the TatABC complex, which probably triggers association of the separate TatA complex to form the active translocon.

The protein localises to the cell inner membrane. Functionally, part of the twin-arginine translocation (Tat) system that transports large folded proteins containing a characteristic twin-arginine motif in their signal peptide across membranes. Together with TatC, TatB is part of a receptor directly interacting with Tat signal peptides. TatB may form an oligomeric binding site that transiently accommodates folded Tat precursor proteins before their translocation. The chain is Sec-independent protein translocase protein TatB from Caulobacter sp. (strain K31).